The primary structure comprises 748 residues: Tyrosine--tRNA ligase 2, cytoplasmic (748 aa).

Position 1 is an N-acetylmethionine (M1). The 'HIGH' region motif lies at 441-449; it reads PSGRMHIAQ. The L-tyrosine site is built by Y564, Q568, D571, and Q586. The 'KMSKS' region signature appears at 623–627; that stretch reads KMSKS. An ATP-binding site is contributed by K626.

The protein belongs to the class-I aminoacyl-tRNA synthetase family.

It localises to the cytoplasm. Its subcellular location is the cytosol. The enzyme catalyses tRNA(Tyr) + L-tyrosine + ATP = L-tyrosyl-tRNA(Tyr) + AMP + diphosphate + H(+). Its function is as follows. Catalyzes the attachment of tyrosine to tRNA(Tyr) in a two-step reaction: tyrosine is first activated by ATP to form Tyr-AMP and then transferred to the acceptor end of tRNA(Tyr). This Arabidopsis thaliana (Mouse-ear cress) protein is Tyrosine--tRNA ligase 2, cytoplasmic.